A 37-amino-acid polypeptide reads, in one-letter code: L-amino-acid oxidase (37 aa).

This sequence belongs to the flavin monoamine oxidase family. FIG1 subfamily. Homodimer; non-covalently linked. FAD is required as a cofactor. In terms of processing, N-Glycosylated. As to expression, expressed by the venom gland.

The protein resides in the secreted. The enzyme catalyses an L-alpha-amino acid + O2 + H2O = a 2-oxocarboxylate + H2O2 + NH4(+). It catalyses the reaction L-leucine + O2 + H2O = 4-methyl-2-oxopentanoate + H2O2 + NH4(+). The catalysed reaction is L-phenylalanine + O2 + H2O = 3-phenylpyruvate + H2O2 + NH4(+). It carries out the reaction L-tryptophan + O2 + H2O = indole-3-pyruvate + H2O2 + NH4(+). The enzyme catalyses L-methionine + O2 + H2O = 4-methylsulfanyl-2-oxobutanoate + H2O2 + NH4(+). It catalyses the reaction L-isoleucine + O2 + H2O = (S)-3-methyl-2-oxopentanoate + H2O2 + NH4(+). The catalysed reaction is L-arginine + O2 + H2O = 5-guanidino-2-oxopentanoate + H2O2 + NH4(+). It carries out the reaction L-histidine + O2 + H2O = 3-(imidazol-5-yl)pyruvate + H2O2 + NH4(+). The enzyme catalyses L-valine + O2 + H2O = 3-methyl-2-oxobutanoate + H2O2 + NH4(+). Catalyzes an oxidative deamination of predominantly hydrophobic and aromatic L-amino acids, thus producing hydrogen peroxide that may contribute to the diverse toxic effects of this enzyme. Is highly active on L-Leu, L-Met, moderately active on L-Arg, L-Trp, L-Phe, L-Val, L-His, and L-Ile, and is weakly or not active on L-Cys, L-Lys, L-Ala, L-Thr, L-Asp, L-Ser, and L-Pro. Exhibits diverse biological activities, such as hemorrhage, edema, apoptosis of vascular endothelial cells or tumor cell lines, as well as regulation of platelet aggregation. Effects of snake L-amino oxidases on platelets are controversial, since they either induce aggregation or inhibit agonist-induced aggregation. These different effects are probably due to different experimental conditions. This protein induce hemolysis and has antibacterial and antiparasitic activities (against the Gram-positive S.aureus). Tested in vivo, this protein significantly inhibits Ehrlich ascite tumors growth and induces an influx of polymorphonuclear cells, as well as spontaneous liberation of hydrogen peroxide from peritoneal macrophages. The sequence is that of L-amino-acid oxidase from Bothrops jararaca (Jararaca).